Reading from the N-terminus, the 116-residue chain is CDKN2AIP N-terminal-like protein (116 aa).

The residue at position 1 (Met-1) is an N-acetylmethionine. The 93-residue stretch at 24-116 (AEQFRSYSES…RSELMKKHQS (93 aa)) folds into the XRN2-binding (XTBD) domain.

It belongs to the CARF family. As to quaternary structure, interacts with XRN2; the interaction is direct.

The chain is CDKN2AIP N-terminal-like protein (CDKN2AIPNL) from Homo sapiens (Human).